Reading from the N-terminus, the 804-residue chain is General transcription and DNA repair factor IIH helicase/translocase subunit XPB (804 aa).

2 disordered regions span residues 1–61 (MSLK…NSNE) and 220–255 (QSSK…KSSS). Residues 14-36 (PDEDLEEYSDYSDVDNYGEEDDD) show a composition bias toward acidic residues. Composition is skewed to low complexity over residues 47-60 (NNNK…TNSN) and 220-229 (QSSKQKSSKP). The span at 236 to 255 (EDKKDITNDSSKETAEKSSS) shows a compositional bias: basic and acidic residues. Residues 335 to 497 (MFGNGRARSG…DLNFLIGPKM (163 aa)) enclose the Helicase ATP-binding domain. 348-355 (LPCGAGKT) provides a ligand contact to ATP. The short motif at 450 to 453 (DEVH) is the DEVH box element. The Helicase C-terminal domain maps to 551 to 705 (QACQFLIDYH…KVITNLKGME (155 aa)). 2 disordered regions span residues 736 to 761 (DDGE…SSGS) and 782 to 804 (KQLK…TKRR). Residues 784-793 (LKKDSKEHHA) show a composition bias toward basic and acidic residues. Over residues 794 to 804 (LFRKHLYTKRR) the composition is skewed to basic residues.

Belongs to the helicase family. RAD25/XPB subfamily. As to quaternary structure, component of the 7-subunit TFIIH core complex composed of XPB/ptr8, XPD/rad15, ssl1, tfb1, tfb2, tfb4 and tfb5, which is active in NER. The core complex associates with the 3-subunit CTD-kinase module TFIIK composed of mcs2/cyclin H, mcs6/cdk7 and pmh1/tfb3 to form the 10-subunit holoenzyme (holo-TFIIH) active in transcription.

The protein resides in the nucleus. The catalysed reaction is Couples ATP hydrolysis with the unwinding of duplex DNA by translocating in the 3'-5' direction.. It catalyses the reaction ATP + H2O = ADP + phosphate + H(+). Functionally, probable ATP-dependent 3'-5' DNA helicase/translocase. Binds dsDNA rather than ssDNA, unzipping it in a translocase rather than classical helicase activity. Component of the general transcription and DNA repair factor IIH (TFIIH) core complex. When complexed to CDK-activating kinase (CAK), involved in RNA transcription by RNA polymerase II. Also involved in transcription-coupled nucleotide excision repair (NER) of damaged DNA. In NER, TFIIH acts by opening DNA around the lesion to allow the excision of the damaged oligonucleotide and its replacement by a new DNA fragment. The ATPase activity of XPB/ptr8, but not its helicase activity, is required for DNA opening. In transcription, TFIIH has an essential role in transcription initiation. When the pre-initiation complex (PIC) has been established, TFIIH is required for promoter opening and promoter escape. The ATP-dependent helicase activity of XPB/ptr8 is required for promoter escape but not for promoter opening. Plays a role in mRNA export. This is General transcription and DNA repair factor IIH helicase/translocase subunit XPB from Schizosaccharomyces pombe (strain 972 / ATCC 24843) (Fission yeast).